The chain runs to 201 residues: LexA repressor (201 aa).

Positions Arg28–Lys48 form a DNA-binding region, H-T-H motif. Catalysis depends on for autocatalytic cleavage activity residues Ser118 and Lys155.

This sequence belongs to the peptidase S24 family. In terms of assembly, homodimer.

It carries out the reaction Hydrolysis of Ala-|-Gly bond in repressor LexA.. Represses a number of genes involved in the response to DNA damage (SOS response), including recA and lexA. In the presence of single-stranded DNA, RecA interacts with LexA causing an autocatalytic cleavage which disrupts the DNA-binding part of LexA, leading to derepression of the SOS regulon and eventually DNA repair. In Saccharophagus degradans (strain 2-40 / ATCC 43961 / DSM 17024), this protein is LexA repressor.